Reading from the N-terminus, the 133-residue chain is Ubiquitin-like FUBI-ribosomal protein eS30 fusion protein (133 aa).

In terms of domain architecture, Ubiquitin-like spans 1 to 74 (MQLFVRAQEL…LEVAGRMLGG (74 aa)). Residue K125 is modified to N6-succinyllysine.

The protein in the N-terminal section; belongs to the ubiquitin family. This sequence in the C-terminal section; belongs to the eukaryotic ribosomal protein eS30 family. Component of the 40S subunit of the ribosome. FUBI is cleaved from ribosomal protein S30 by the deubiquitinase USP36 before the assembly of ribosomal protein S30 into pre-40S ribosomal particles. FUBI removal from ribosomal protein S30 is a crucial event for the final maturation of pre-40S particles.

Its subcellular location is the cytoplasm. It is found in the nucleus. In terms of biological role, may have pro-apoptotic activity. Functionally, component of the 40S subunit of the ribosome. Contributes to the assembly and function of 40S ribosomal subunits. The protein is Ubiquitin-like FUBI-ribosomal protein eS30 fusion protein (FAU) of Oryctolagus cuniculus (Rabbit).